We begin with the raw amino-acid sequence, 355 residues long: DNA-directed RNA polymerase subunit alpha (355 aa).

The alpha N-terminal domain (alpha-NTD) stretch occupies residues 1–233 (MVREKVRVST…DLFIPFLHKE (233 aa)). The segment at 268-355 (KKKIALKSIF…EIYCYSIFFH (88 aa)) is alpha C-terminal domain (alpha-CTD).

This sequence belongs to the RNA polymerase alpha chain family. In terms of assembly, in plastids the minimal PEP RNA polymerase catalytic core is composed of four subunits: alpha, beta, beta', and beta''. When a (nuclear-encoded) sigma factor is associated with the core the holoenzyme is formed, which can initiate transcription.

It localises to the plastid. The protein localises to the chloroplast. It catalyses the reaction RNA(n) + a ribonucleoside 5'-triphosphate = RNA(n+1) + diphosphate. Its function is as follows. DNA-dependent RNA polymerase catalyzes the transcription of DNA into RNA using the four ribonucleoside triphosphates as substrates. This Jasminum nudiflorum (Winter jasmine) protein is DNA-directed RNA polymerase subunit alpha.